Reading from the N-terminus, the 128-residue chain is Large ribosomal subunit protein eL22 (128 aa).

It belongs to the eukaryotic ribosomal protein eL22 family. Component of the large ribosomal subunit.

It localises to the cytoplasm. Functionally, component of the large ribosomal subunit. The ribosome is a large ribonucleoprotein complex responsible for the synthesis of proteins in the cell. In Xenopus tropicalis (Western clawed frog), this protein is Large ribosomal subunit protein eL22 (rpl22).